Reading from the N-terminus, the 220-residue chain is MSSNSTPEKVTAEHVLWYIPNKIGYVRVITAALSFFVMKNHPTAFTWLYSTSCLLDALDGTMARKYNQVSSLGAVLDMVTDRSSTAGLMCFLCVQYPQWCVFFQLMLGLDITSHYMHMYASLSAGKTSHKSVGEGESRLLHLYYTRRDVLFTICAFNELFYAGLYLQLFSNSATFGKWTTIISFPGYVFKQTANVVQLKRAALILADNDAKNANEKNKTY.

The Cytoplasmic portion of the chain corresponds to 1–20 (MSSNSTPEKVTAEHVLWYIP). The helical transmembrane segment at 21 to 41 (NKIGYVRVITAALSFFVMKNH) threads the bilayer. The Lumenal portion of the chain corresponds to 42–45 (PTAF). A helical transmembrane segment spans residues 46–66 (TWLYSTSCLLDALDGTMARKY). Residues D56 and D59 each coordinate Mg(2+). A CDP-1,2-diacyl-sn-glycerol-binding residues include G60, R64, and S70. Residues 67 to 75 (NQVSSLGAV) lie on the Cytoplasmic side of the membrane. The chain crosses the membrane as a helical span at residues 76 to 96 (LDMVTDRSSTAGLMCFLCVQY). Mg(2+) contacts are provided by D77 and D81. D81 acts as the Proton acceptor in catalysis. Topologically, residues 97 to 98 (PQ) are lumenal. Residues 99-119 (WCVFFQLMLGLDITSHYMHMY) traverse the membrane as a helical segment. Residues 120 to 145 (ASLSAGKTSHKSVGEGESRLLHLYYT) are Cytoplasmic-facing. A helical membrane pass occupies residues 146–166 (RRDVLFTICAFNELFYAGLYL). Topologically, residues 167–170 (QLFS) are lumenal. The chain crosses the membrane as a helical span at residues 171 to 191 (NSATFGKWTTIISFPGYVFKQ). The Cytoplasmic portion of the chain corresponds to 192 to 220 (TANVVQLKRAALILADNDAKNANEKNKTY).

The protein belongs to the CDP-alcohol phosphatidyltransferase class-I family. It depends on Mn(2+) as a cofactor. Mg(2+) is required as a cofactor.

The protein resides in the microsome membrane. It is found in the endoplasmic reticulum membrane. It localises to the golgi apparatus membrane. Its subcellular location is the mitochondrion outer membrane. It carries out the reaction a CDP-1,2-diacyl-sn-glycerol + myo-inositol = a 1,2-diacyl-sn-glycero-3-phospho-(1D-myo-inositol) + CMP + H(+). In terms of biological role, catalyzes the synthesis of phosphatidylinositol (PtdIns). The sequence is that of CDP-diacylglycerol--inositol 3-phosphatidyltransferase from Saccharomyces cerevisiae (strain ATCC 204508 / S288c) (Baker's yeast).